The sequence spans 408 residues: Acetate kinase (408 aa).

Residue Asn-7 coordinates Mg(2+). Lys-14 contacts ATP. Residue Arg-91 coordinates substrate. The Proton donor/acceptor role is filled by Asp-148. Residues 208 to 212, 283 to 285, and 331 to 335 each bind ATP; these read HLGNG, DFR, and GIGEN. Mg(2+) is bound at residue Glu-384.

Belongs to the acetokinase family. As to quaternary structure, homodimer. Mg(2+) serves as cofactor. The cofactor is Mn(2+).

It localises to the cytoplasm. The catalysed reaction is acetate + ATP = acetyl phosphate + ADP. It participates in metabolic intermediate biosynthesis; acetyl-CoA biosynthesis; acetyl-CoA from acetate: step 1/2. Functionally, catalyzes the formation of acetyl phosphate from acetate and ATP. Can also catalyze the reverse reaction. The chain is Acetate kinase from Methanosarcina mazei (strain ATCC BAA-159 / DSM 3647 / Goe1 / Go1 / JCM 11833 / OCM 88) (Methanosarcina frisia).